Reading from the N-terminus, the 411-residue chain is Na(+)-translocating NADH-quinone reductase subunit F (411 aa).

A helical transmembrane segment spans residues 5–25 (VILALGIAAFTVIVLVLVAII). Residues 36–130 (GDITIGINDD…NMEVELPEEI (95 aa)) form the 2Fe-2S ferredoxin-type domain. [2Fe-2S] cluster contacts are provided by cysteine 73, cysteine 79, cysteine 82, and cysteine 114. In terms of domain architecture, FAD-binding FR-type spans 133–273 (VKKWECTVIS…SGPFGEFFAK (141 aa)).

The protein belongs to the NqrF family. In terms of assembly, composed of six subunits; NqrA, NqrB, NqrC, NqrD, NqrE and NqrF. It depends on [2Fe-2S] cluster as a cofactor. FAD is required as a cofactor.

The protein resides in the cell inner membrane. The catalysed reaction is a ubiquinone + n Na(+)(in) + NADH + H(+) = a ubiquinol + n Na(+)(out) + NAD(+). In terms of biological role, NQR complex catalyzes the reduction of ubiquinone-1 to ubiquinol by two successive reactions, coupled with the transport of Na(+) ions from the cytoplasm to the periplasm. The first step is catalyzed by NqrF, which accepts electrons from NADH and reduces ubiquinone-1 to ubisemiquinone by a one-electron transfer pathway. In Haemophilus influenzae (strain PittEE), this protein is Na(+)-translocating NADH-quinone reductase subunit F.